The chain runs to 439 residues: Agnestins biosynthesis cluster transcriptional coactivator AgnL9 (439 aa).

Residues 79-149 (MTIQTQLLAC…EPGHITHSAL (71 aa)) enclose the HTH iclR-type domain. Residues 109 to 128 (MKDVSELIDVPENQLGRIVR) constitute a DNA-binding region (H-T-H motif).

It localises to the nucleus. Functionally, transcriptional coactivator; part of the gene cluster that mediates the biosynthesis of agnestins, dihydroxy-xanthone metabolites. In Paecilomyces divaricatus (Penicillium divaricatum), this protein is Agnestins biosynthesis cluster transcriptional coactivator AgnL9.